The primary structure comprises 646 residues: Cartilage acidic protein 1 (646 aa).

Residues 1–28 form the signal peptide; the sequence is MAPSADPGMVRMALLLLPPLWLLPLTGG. Residues 47 to 89 form an FG-GAP 1; atypical repeat; the sequence is DYDSNPTQLNYGVAVTDVDHDGDFEIVVAGYTGPNLVLKYNRA. One copy of the FG-GAP 2; atypical repeat lies at 106-148; sequence YALRDRQGNAIGVTACDIDGDGREEIYFLNTNNAFSGVATYTD. The FG-GAP 3; atypical repeat unit spans residues 284–334; that stretch reads AGVDDPHQHGRGVALADFNRDGKVDIVYGNWNGPHRLYLQMSAHGKVRFRD. One copy of the FG-GAP 4; atypical repeat lies at 396–438; that stretch reads GDALEPEGRGTGGVVTDFDGDGMLDLILSHGESMAQPLSVFRG. The 47-residue stretch at 560–606 folds into the EGF-like domain; sequence DTNECIQFPFVCPRDKPVCVNTYGSYRCRTNKRCNRGYEPNEDGTAC. 3 disulfides stabilise this stretch: Cys564–Cys578, Cys571–Cys587, and Cys593–Cys606.

The protein resides in the secreted. Its subcellular location is the extracellular space. The protein localises to the extracellular matrix. This chain is Cartilage acidic protein 1 (Crtac1), found in Mus musculus (Mouse).